Reading from the N-terminus, the 254-residue chain is Pyruvate dehydrogenase complex repressor (254 aa).

One can recognise an HTH gntR-type domain in the interval 9-77 (PKLSDVIEQQ…QGGGTFVQSS (69 aa)). Positions 37–56 (ERELAKQFDVSRPSLREAIQ) form a DNA-binding region, H-T-H motif.

In terms of biological role, transcriptional repressor for the pyruvate dehydrogenase complex genes aceEF and lpd. This chain is Pyruvate dehydrogenase complex repressor (pdhR), found in Escherichia coli O6:H1 (strain CFT073 / ATCC 700928 / UPEC).